A 258-amino-acid polypeptide reads, in one-letter code: 5-oxoprolinase subunit A 2 (258 aa).

The protein belongs to the LamB/PxpA family. As to quaternary structure, forms a complex composed of PxpA, PxpB and PxpC.

The enzyme catalyses 5-oxo-L-proline + ATP + 2 H2O = L-glutamate + ADP + phosphate + H(+). In terms of biological role, catalyzes the cleavage of 5-oxoproline to form L-glutamate coupled to the hydrolysis of ATP to ADP and inorganic phosphate. This Pseudomonas putida (strain ATCC 47054 / DSM 6125 / CFBP 8728 / NCIMB 11950 / KT2440) protein is 5-oxoprolinase subunit A 2.